The following is a 173-amino-acid chain: Small ribosomal subunit protein uS9 (173 aa).

Residues 1–15 show a composition bias toward polar residues; sequence MTDTPTENLENTEVT. 2 disordered regions span residues 1-26 and 135-173; these read MTDTPTENLENTEVTPFTEGDREIAY and EASRPALKKAGMLTRDARVKERKKAGLKKARKAPQYSKR. Over residues 154 to 173 the composition is skewed to basic residues; it reads KERKKAGLKKARKAPQYSKR.

It belongs to the universal ribosomal protein uS9 family.

This chain is Small ribosomal subunit protein uS9, found in Cutibacterium acnes (strain DSM 16379 / KPA171202) (Propionibacterium acnes).